A 141-amino-acid polypeptide reads, in one-letter code: Large ribosomal subunit protein uL16 (141 aa).

The protein belongs to the universal ribosomal protein uL16 family. Part of the 50S ribosomal subunit.

Its function is as follows. Binds 23S rRNA and is also seen to make contacts with the A and possibly P site tRNAs. The polypeptide is Large ribosomal subunit protein uL16 (Nostoc punctiforme (strain ATCC 29133 / PCC 73102)).